The following is a 322-amino-acid chain: 2-methylene-furan-3-one reductase (322 aa).

NADP(+) contacts are provided by residues K59, 174 to 175 (GV), 197 to 200 (STKK), Y215, I253, 264 to 266 (FVL), and 311 to 312 (RA). K59 provides a ligand contact to substrate.

Belongs to the zinc-containing alcohol dehydrogenase family. Quinone oxidoreductase subfamily. Monomer.

It carries out the reaction 4-hydroxy-2,5-dimethyl-furan-3(2H)-one + NADP(+) = 4-hydroxy-5-methyl-2-methylenefuran-3(2H)-one + NADPH + H(+). Its function is as follows. Enone oxidoreductase involved in the biosynthesis of 4-hydroxy-2,5-dimethyl-3(2H)-furanone (HDMF or furaneol), the key flavor compound in strawberries. The protein is 2-methylene-furan-3-one reductase (EO) of Fragaria vesca (Woodland strawberry).